The primary structure comprises 231 residues: Lipid A acyltransferase PagP (231 aa).

Residues methionine 1–serine 23 form the signal peptide. Positions serine 24–asparagine 43 are enriched in low complexity. The interval serine 24 to leucine 59 is disordered. Catalysis depends on residues histidine 100, aspartate 145, and serine 146.

It belongs to the lipid A palmitoyltransferase family. As to quaternary structure, homodimer.

It localises to the cell outer membrane. The enzyme catalyses a lipid A + a 1,2-diacyl-sn-glycero-3-phosphocholine = a hepta-acyl lipid A + a 2-acyl-sn-glycero-3-phosphocholine. It catalyses the reaction a lipid IVA + a 1,2-diacyl-sn-glycero-3-phosphocholine = a lipid IVB + a 2-acyl-sn-glycero-3-phosphocholine. It carries out the reaction a lipid IIA + a 1,2-diacyl-sn-glycero-3-phosphocholine = a lipid IIB + a 2-acyl-sn-glycero-3-phosphocholine. Transfers a fatty acid residue from the sn-1 position of a phospholipid to the N-linked hydroxyfatty acid chain on the proximal unit of lipid A or its precursors. This chain is Lipid A acyltransferase PagP, found in Legionella longbeachae serogroup 1 (strain NSW150).